The following is a 162-amino-acid chain: NADH-quinone oxidoreductase subunit I (162 aa).

2 4Fe-4S ferredoxin-type domains span residues 54–83 (RRYE…IESE) and 93–122 (TRYD…ETQI). [4Fe-4S] cluster contacts are provided by Cys-63, Cys-66, Cys-69, Cys-73, Cys-102, Cys-105, Cys-108, and Cys-112.

It belongs to the complex I 23 kDa subunit family. As to quaternary structure, NDH-1 is composed of 14 different subunits. Subunits NuoA, H, J, K, L, M, N constitute the membrane sector of the complex. Requires [4Fe-4S] cluster as cofactor.

It localises to the cell inner membrane. The catalysed reaction is a quinone + NADH + 5 H(+)(in) = a quinol + NAD(+) + 4 H(+)(out). Its function is as follows. NDH-1 shuttles electrons from NADH, via FMN and iron-sulfur (Fe-S) centers, to quinones in the respiratory chain. The immediate electron acceptor for the enzyme in this species is believed to be ubiquinone. Couples the redox reaction to proton translocation (for every two electrons transferred, four hydrogen ions are translocated across the cytoplasmic membrane), and thus conserves the redox energy in a proton gradient. The polypeptide is NADH-quinone oxidoreductase subunit I (Burkholderia cenocepacia (strain ATCC BAA-245 / DSM 16553 / LMG 16656 / NCTC 13227 / J2315 / CF5610) (Burkholderia cepacia (strain J2315))).